Here is a 120-residue protein sequence, read N- to C-terminus: UPF0102 protein Caur_2698 (120 aa).

This sequence belongs to the UPF0102 family.

In Chloroflexus aurantiacus (strain ATCC 29366 / DSM 635 / J-10-fl), this protein is UPF0102 protein Caur_2698.